A 168-amino-acid chain; its full sequence is Crossover junction endodeoxyribonuclease RuvC (168 aa).

Residues aspartate 9, glutamate 69, and aspartate 141 contribute to the active site. Mg(2+) contacts are provided by aspartate 9, glutamate 69, and aspartate 141.

Belongs to the RuvC family. As to quaternary structure, homodimer which binds Holliday junction (HJ) DNA. The HJ becomes 2-fold symmetrical on binding to RuvC with unstacked arms; it has a different conformation from HJ DNA in complex with RuvA. In the full resolvosome a probable DNA-RuvA(4)-RuvB(12)-RuvC(2) complex forms which resolves the HJ. Mg(2+) serves as cofactor.

Its subcellular location is the cytoplasm. It carries out the reaction Endonucleolytic cleavage at a junction such as a reciprocal single-stranded crossover between two homologous DNA duplexes (Holliday junction).. The RuvA-RuvB-RuvC complex processes Holliday junction (HJ) DNA during genetic recombination and DNA repair. Endonuclease that resolves HJ intermediates. Cleaves cruciform DNA by making single-stranded nicks across the HJ at symmetrical positions within the homologous arms, yielding a 5'-phosphate and a 3'-hydroxyl group; requires a central core of homology in the junction. The consensus cleavage sequence is 5'-(A/T)TT(C/G)-3'. Cleavage occurs on the 3'-side of the TT dinucleotide at the point of strand exchange. HJ branch migration catalyzed by RuvA-RuvB allows RuvC to scan DNA until it finds its consensus sequence, where it cleaves and resolves the cruciform DNA. In Bdellovibrio bacteriovorus (strain ATCC 15356 / DSM 50701 / NCIMB 9529 / HD100), this protein is Crossover junction endodeoxyribonuclease RuvC.